The following is a 439-amino-acid chain: MTLTHTQLAEHGYMSGFANEFATEALPGALPVGRNSPQCAPYGLYAEQLSGTAFTAPRAHNRRSWLYRIRPAAMHTPFTQIEQSRFLSRFDQVPPSPNQMRWSPPAMPSVPTDFVDGIVTMAGNGGPEAMTGCGIHLYLANQSMQDRFFYNADGEMLIVPQQGRLLMVTELGRLEVEPQEIVVIPRGVRFRVELPDGEARGYICENYGALFQLPDLGVIGSNGLANPRDFLSPVASYEDREGDFELVAKFQGNLWRAGIGHSPLDVVAWHGNYTPYKYDLRRFNTIGSISFDHPDPSIFLVLQSPSATPGVDTIDFVIFGPRWLAMQDSFRPPWFHRNIASEFMGLITGVYDAKAEGFAPGGASLHNCMSGHGPDAETFEKASAADTSKPHRIEDTMAFMFETPGVIRPTPYAAQSASLQQDYYTCWQGLKKHFNPNTR.

The Proton acceptor role is filled by H293. Residues H336 and E342 each coordinate Fe cation. Residues Y351 and H372 each coordinate homogentisate. H372 is a Fe cation binding site.

Belongs to the homogentisate dioxygenase family. As to quaternary structure, hexamer; dimer of trimers. Fe cation is required as a cofactor.

It carries out the reaction homogentisate + O2 = 4-maleylacetoacetate + H(+). The protein operates within amino-acid degradation; L-phenylalanine degradation; acetoacetate and fumarate from L-phenylalanine: step 4/6. Its function is as follows. Involved in the catabolism of homogentisate (2,5-dihydroxyphenylacetate or 2,5-OH-PhAc), a central intermediate in the degradation of phenylalanine and tyrosine. Catalyzes the oxidative ring cleavage of the aromatic ring of homogentisate to yield maleylacetoacetate. The chain is Homogentisate 1,2-dioxygenase from Cupriavidus necator (strain ATCC 17699 / DSM 428 / KCTC 22496 / NCIMB 10442 / H16 / Stanier 337) (Ralstonia eutropha).